The following is a 198-amino-acid chain: uncharacterized protein (198 aa).

Positions 11–71 constitute an HTH tetR-type domain; it reads EGTHKAILSA…DSFLSTATDR (61 aa). Positions 34–53 form a DNA-binding region, H-T-H motif; the sequence is TVDKIAERAKVSKATIYKWW.

This is an uncharacterized protein from Bacillus subtilis (strain 168).